The following is a 557-amino-acid chain: Potassium-transporting ATPase potassium-binding subunit (557 aa).

Transmembrane regions (helical) follow at residues 5 to 25 (GFLL…PLGS), 63 to 83 (LSAI…MLLG), 132 to 152 (GLTV…FALI), 170 to 190 (LLRI…LFFI), 253 to 273 (FVQM…FGEV), 283 to 303 (LLWA…WAEV), 329 to 349 (VLVS…AVIA), 356 to 376 (ALGG…FGGV), 379 to 399 (GLYG…LMIG), 416 to 436 (LTAL…ALAM), 484 to 504 (LLAL…MAIA), and 526 to 546 (LFVG…FIPA).

The protein belongs to the KdpA family. The system is composed of three essential subunits: KdpA, KdpB and KdpC.

The protein localises to the cell inner membrane. Functionally, part of the high-affinity ATP-driven potassium transport (or Kdp) system, which catalyzes the hydrolysis of ATP coupled with the electrogenic transport of potassium into the cytoplasm. This subunit binds the periplasmic potassium ions and delivers the ions to the membrane domain of KdpB through an intramembrane tunnel. The chain is Potassium-transporting ATPase potassium-binding subunit from Escherichia coli O6:H1 (strain CFT073 / ATCC 700928 / UPEC).